The primary structure comprises 193 residues: Translocation protein SEC72 (193 aa).

As to quaternary structure, component of the heterotetrameric Sec62/63complex composed of SEC62, SEC63, SEC71 and SEC72. The Sec62/63 complex associates with the Sec61 complex to form the Sec complex. May interact with protein YLR301W. Part of a complex consisting of KAR2, SEC63, SEC66 and SEC72.

The protein resides in the cytoplasm. In terms of biological role, acts as a non-essential component of the Sec62/63 complex which is involved in SRP-independent post-translational translocation across the endoplasmic reticulum (ER) and functions together with the Sec61 complex and KAR2 in a channel-forming translocon complex. A cycle of assembly and disassembly of Sec62/63 complex from SEC61 may govern the activity of the translocon. SEC72 may be involved in signal peptide recognition for a defined subset of leader peptides, or may increase the efficiency of unusual or 'difficult' secretory precursors to the translocation pore, it may be that this protein binds charged leader peptides to the membrane until they engage the translocation apparatus. The polypeptide is Translocation protein SEC72 (SEC72) (Saccharomyces cerevisiae (strain ATCC 204508 / S288c) (Baker's yeast)).